The following is a 282-amino-acid chain: MLKDFFSKKKRYATIPSERAKHDIPEGIMTKCPSCRTIMYTKELKKNLYVCDSCGFHHRMNAFDRIESLLDPGTFVELDKGMTTEDPLSFPTYREKVEADRKKTNLNEAIVTGEGTMNGFPLVIGVMDARFRMGSMGSVVGEKITRAIERAIENKQPFLLFSASGGARMQEGVLSLMQMAKTSAALERLDRVGGLFISVMTHPTTGGVSASFASLGDYNFAEPGALIGFAGRRIIEQTIREELPNDFQTAEFLLKHGQLDRVIPRSEMKDTLTKILDIHHVS.

One can recognise a CoA carboxyltransferase N-terminal domain in the interval 28 to 282; it reads IMTKCPSCRT…TKILDIHHVS (255 aa). Zn(2+) is bound by residues Cys-32, Cys-35, Cys-51, and Cys-54. The segment at 32-54 adopts a C4-type zinc-finger fold; sequence CPSCRTIMYTKELKKNLYVCDSC.

It belongs to the AccD/PCCB family. In terms of assembly, acetyl-CoA carboxylase is a heterohexamer composed of biotin carboxyl carrier protein (AccB), biotin carboxylase (AccC) and two subunits each of ACCase subunit alpha (AccA) and ACCase subunit beta (AccD). It depends on Zn(2+) as a cofactor.

It is found in the cytoplasm. The catalysed reaction is N(6)-carboxybiotinyl-L-lysyl-[protein] + acetyl-CoA = N(6)-biotinyl-L-lysyl-[protein] + malonyl-CoA. It functions in the pathway lipid metabolism; malonyl-CoA biosynthesis; malonyl-CoA from acetyl-CoA: step 1/1. In terms of biological role, component of the acetyl coenzyme A carboxylase (ACC) complex. Biotin carboxylase (BC) catalyzes the carboxylation of biotin on its carrier protein (BCCP) and then the CO(2) group is transferred by the transcarboxylase to acetyl-CoA to form malonyl-CoA. The polypeptide is Acetyl-coenzyme A carboxylase carboxyl transferase subunit beta (Halalkalibacterium halodurans (strain ATCC BAA-125 / DSM 18197 / FERM 7344 / JCM 9153 / C-125) (Bacillus halodurans)).